Reading from the N-terminus, the 67-residue chain is Large ribosomal subunit protein uL29 (67 aa).

This sequence belongs to the universal ribosomal protein uL29 family.

This Wolbachia sp. subsp. Drosophila simulans (strain wRi) protein is Large ribosomal subunit protein uL29.